Here is a 210-residue protein sequence, read N- to C-terminus: Guanylate kinase (210 aa).

Residues 6–184 form the Guanylate kinase-like domain; sequence GTLYIISAPS…ALQDLKCIIQ (179 aa). 13-20 lines the ATP pocket; the sequence is APSGAGKT.

Belongs to the guanylate kinase family.

The protein localises to the cytoplasm. The enzyme catalyses GMP + ATP = GDP + ADP. Functionally, essential for recycling GMP and indirectly, cGMP. This chain is Guanylate kinase, found in Nitrosospira multiformis (strain ATCC 25196 / NCIMB 11849 / C 71).